Consider the following 250-residue polypeptide: Small ribosomal subunit protein uS3z (250 aa).

One can recognise a KH type-2 domain in the interval 21 to 92; that stretch reads LNEVLTRELA…SVELYAEKVN (72 aa).

It belongs to the universal ribosomal protein uS3 family. In terms of assembly, interacts with SNRNP35.

This chain is Small ribosomal subunit protein uS3z (RPS3A), found in Arabidopsis thaliana (Mouse-ear cress).